Reading from the N-terminus, the 553-residue chain is Interleukin-20 receptor subunit alpha (553 aa).

Positions 1-29 are cleaved as a signal peptide; it reads MRAPGRPALRPLPLPPLLLLLLAAPWGRA. The Extracellular segment spans residues 30 to 250; that stretch reads VPCVSGGLPK…KDQSSEFKAK (221 aa). Fibronectin type-III domains are found at residues 37–135 and 136–242; these read LPKP…FLET and QIGP…TLKD. N-linked (GlcNAc...) asparagine glycans are attached at residues Asn-42, Asn-83, Asn-91, Asn-182, Asn-191, and Asn-200. Cysteines 87 and 95 form a disulfide. A disulfide bridge connects residues Cys-215 and Cys-236. Residues 251-271 traverse the membrane as a helical segment; sequence IIFWYVLPVSITVFLFSVMGY. Over 272–553 the chain is Cytoplasmic; the sequence is SIYRYIHVGK…EWGLYVQMEN (282 aa). Disordered regions lie at residues 333–353 and 462–515; these read SSDV…PPQE and QEHT…LGEE. Residues 334-346 show a composition bias toward polar residues; that stretch reads SDVSSLNDPQPSG. The span at 499–513 shows a compositional bias: acidic residues; the sequence is QDSEGCEPSEGDGLG.

The protein belongs to the type II cytokine receptor family. Heterodimer with IL20RB and heterodimer with IL10RB. As to expression, widely expressed with highest levels in skin and testis and high levels in brain. Highly expressed in psoriatic skin.

Its subcellular location is the membrane. Its function is as follows. The IL20RA/IL20RB dimer is a receptor for IL19, IL20 and IL24. The IL20RA/IL10RB dimer is a receptor for IL26. The chain is Interleukin-20 receptor subunit alpha (IL20RA) from Homo sapiens (Human).